The primary structure comprises 297 residues: MTSASPSPLRAANAASSAPVPPPAMKPSAPPVNILPTQLARTYSFVHPAALLAILATRFQALVADPVAEMLNTLPFLALLQVTYVMVCLPPAGSVLPSPPASPVSDGDEKEKEKEKEKEKEKEKRKLPLRAGKLPRKKNQTHAAGLSAKLTPALLSLILTFLLATPVLSLLLVLFGAPLTTHNAETVLCAAHMALLASTALIYVHGVDGAVWREVWAFARPADAVWGGALGTALGAWFGAVPIPLDWDRPWQAFPITILTGAYFGFAVGSVVCRSSWLFGKWLEFTPEQDDRDKKTE.

Residues 1–18 (MTSASPSPLRAANAASSA) are compositionally biased toward low complexity. Residues 1-26 (MTSASPSPLRAANAASSAPVPPPAMK) are disordered. 2 helical membrane-spanning segments follow: residues 44–64 (SFVH…ALVA) and 76–96 (FLAL…GSVL). Positions 97–140 (PSPPASPVSDGDEKEKEKEKEKEKEKEKRKLPLRAGKLPRKKNQ) are disordered. The span at 107–126 (GDEKEKEKEKEKEKEKEKRK) shows a compositional bias: basic and acidic residues. A compositionally biased stretch (basic residues) spans 127 to 140 (LPLRAGKLPRKKNQ). Residue Asn139 is glycosylated (N-linked (GlcNAc...) asparagine). 4 consecutive transmembrane segments (helical) span residues 157–177 (LILT…LFGA), 187–207 (VLCA…VHGV), 225–245 (VWGG…PIPL), and 253–273 (AFPI…SVVC).

Belongs to the PIGF family.

Its subcellular location is the endoplasmic reticulum membrane. It functions in the pathway glycolipid biosynthesis; glycosylphosphatidylinositol-anchor biosynthesis. Acts in the GPI biosynthetic pathway between GlcNAc-PI synthesis and GPI transfer to protein. The sequence is that of Glycosylphosphatidylinositol anchor biosynthesis protein 11 (gpi11) from Aspergillus fumigatus (strain ATCC MYA-4609 / CBS 101355 / FGSC A1100 / Af293) (Neosartorya fumigata).